The primary structure comprises 386 residues: Methylthioribose-1-phosphate isomerase (386 aa).

Asp-258 serves as the catalytic Proton donor.

It belongs to the eIF-2B alpha/beta/delta subunits family. MtnA subfamily.

It is found in the cytoplasm. The protein resides in the nucleus. The catalysed reaction is 5-(methylsulfanyl)-alpha-D-ribose 1-phosphate = 5-(methylsulfanyl)-D-ribulose 1-phosphate. Its pathway is amino-acid biosynthesis; L-methionine biosynthesis via salvage pathway; L-methionine from S-methyl-5-thio-alpha-D-ribose 1-phosphate: step 1/6. Catalyzes the interconversion of methylthioribose-1-phosphate (MTR-1-P) into methylthioribulose-1-phosphate (MTRu-1-P). This Uncinocarpus reesii (strain UAMH 1704) protein is Methylthioribose-1-phosphate isomerase.